The chain runs to 89 residues: Large ribosomal subunit protein eL34 (89 aa).

The interval 45-71 (GIPRGRPVEMRKLPKTKKRPERPMPHL) is disordered.

It belongs to the eukaryotic ribosomal protein eL34 family. Part of the 50S ribosomal subunit.

The protein is Large ribosomal subunit protein eL34 of Pyrococcus furiosus (strain ATCC 43587 / DSM 3638 / JCM 8422 / Vc1).